We begin with the raw amino-acid sequence, 292 residues long: MITGSLVALVTPMYPNGDIHWEDLDKLVDFHIENGTHGIVAVGTTGESATLDPEEHIRTIGHIIKRVNGRIPVIAGTGGNSTREAIELTTEAHKLGADACLLVVPYYNKPTQEGLYQHFKAIAEAVPGMSQILYNVPGRTACDMLNETVVRLADIPNIVGIKDATGNIPRGAELIEALDGRLAVYSGDDATAADLMLAGAKGNVSVTANVAPKAMAELCEAAIAGNEDETRRLNELLMPLNRKLFLEANPIPVKWALYRMGMIGEGIRLPLTPLSEKFHGEVEDALKASGVL.

Position 45 (Thr45) interacts with pyruvate. Tyr134 (proton donor/acceptor) is an active-site residue. Residue Lys162 is the Schiff-base intermediate with substrate of the active site. Val204 contributes to the pyruvate binding site.

Belongs to the DapA family. As to quaternary structure, homotetramer; dimer of dimers.

It is found in the cytoplasm. The enzyme catalyses L-aspartate 4-semialdehyde + pyruvate = (2S,4S)-4-hydroxy-2,3,4,5-tetrahydrodipicolinate + H2O + H(+). The protein operates within amino-acid biosynthesis; L-lysine biosynthesis via DAP pathway; (S)-tetrahydrodipicolinate from L-aspartate: step 3/4. Functionally, catalyzes the condensation of (S)-aspartate-beta-semialdehyde [(S)-ASA] and pyruvate to 4-hydroxy-tetrahydrodipicolinate (HTPA). This chain is 4-hydroxy-tetrahydrodipicolinate synthase, found in Marinobacter nauticus (strain ATCC 700491 / DSM 11845 / VT8) (Marinobacter aquaeolei).